Consider the following 501-residue polypeptide: UPF0616 protein C1687.04 (501 aa).

It belongs to the UPF0616 family.

Its subcellular location is the cytoplasm. It is found in the nucleus. The sequence is that of UPF0616 protein C1687.04 from Schizosaccharomyces pombe (strain 972 / ATCC 24843) (Fission yeast).